The following is a 162-amino-acid chain: tRNA (cytidine(34)-2'-O)-methyltransferase (162 aa).

S-adenosyl-L-methionine-binding residues include Leu83, Gly105, Ile127, and Ser135.

The protein belongs to the class IV-like SAM-binding methyltransferase superfamily. RNA methyltransferase TrmH family. TrmL subfamily. As to quaternary structure, homodimer.

The protein resides in the cytoplasm. The enzyme catalyses cytidine(34) in tRNA + S-adenosyl-L-methionine = 2'-O-methylcytidine(34) in tRNA + S-adenosyl-L-homocysteine + H(+). It catalyses the reaction 5-carboxymethylaminomethyluridine(34) in tRNA(Leu) + S-adenosyl-L-methionine = 5-carboxymethylaminomethyl-2'-O-methyluridine(34) in tRNA(Leu) + S-adenosyl-L-homocysteine + H(+). In terms of biological role, methylates the ribose at the nucleotide 34 wobble position in the two leucyl isoacceptors tRNA(Leu)(CmAA) and tRNA(Leu)(cmnm5UmAA). Catalyzes the methyl transfer from S-adenosyl-L-methionine to the 2'-OH of the wobble nucleotide. The polypeptide is tRNA (cytidine(34)-2'-O)-methyltransferase (Yersinia pestis).